The chain runs to 305 residues: Secreted mono- and diacylglycerol lipase A (305 aa).

An N-terminal signal peptide occupies residues 1-26 (MRLSFFTALSAVASLGYALPGKLQSR). Cystine bridges form between Cys-62–Cys-67 and Cys-129–Cys-132. Ser-171 functions as the Nucleophile in the catalytic mechanism. Asp-225 (charge relay system) is an active-site residue. An N-linked (GlcNAc...) asparagine glycan is attached at Asn-251. His-285 serves as the catalytic Charge relay system. A propeptide spans 303 to 305 (KRV) (removed in mature form).

It belongs to the AB hydrolase superfamily. Lipase family. Class 3 subfamily. Multiple forms of this lipase are due to the presence of different carbohydrates, which may contribute to the stability of this lipase but not to the enzyme activity.

The protein resides in the secreted. It catalyses the reaction a monoacylglycerol + H2O = glycerol + a fatty acid + H(+). It carries out the reaction a diacylglycerol + H2O = a monoacylglycerol + a fatty acid + H(+). Its activity is regulated as follows. Both Fe(3+) and Hg(2+) inhibit the activity significantly. Functionally, secreted lipase strictly specific to mono- and diacylglycerol, but not triacylglycerol. Hydrolyzes long-chain monoacylglycerols most efficiently with the highest activities observed on 1- and 3- monopalmitoyl-sn-glycerol or 1-monostearoyl-rac-glycerol. Prefers to attack alpha positions to beta positions of monoacylglycerol, but shows no stereospecificity on mono- and diacylglycerol. The sequence is that of Secreted mono- and diacylglycerol lipase A from Penicillium camembertii.